A 156-amino-acid polypeptide reads, in one-letter code: MSRRHRAEKREIFPDPKFGDRDLTKFMNYIMLDGKKSVAERIVYGALEIVEEKLKREPIRVFHDALDNVAPEVEVRSRRVGGATYQVPVEVRAERKKALAIRWLTGAARGRNENTMRERLAAEMMDASANRGTAVKKREDTHRMAEANRAFSHYRW.

It belongs to the universal ribosomal protein uS7 family. In terms of assembly, part of the 30S ribosomal subunit. Contacts proteins S9 and S11.

Functionally, one of the primary rRNA binding proteins, it binds directly to 16S rRNA where it nucleates assembly of the head domain of the 30S subunit. Is located at the subunit interface close to the decoding center, probably blocks exit of the E-site tRNA. This chain is Small ribosomal subunit protein uS7, found in Maricaulis maris (strain MCS10) (Caulobacter maris).